The following is a 79-amino-acid chain: Hematopoietic cell signal transducer (79 aa).

A signal peptide spans 1–18 (MAPPGGILFLLLLPVAAA). At 19 to 35 (QVTSGSCSGCGPLSLPL) the chain is on the extracellular side. A helical transmembrane segment spans residues 36 to 56 (LAGLVAADAVVSLLIVVGVFV). Residues 57–79 (CGRPRSRPTQEDGKIYINMPGRG) lie on the Cytoplasmic side of the membrane. Tyr-72 carries the post-translational modification Phosphotyrosine. Residues 72–74 (YIN) form a GRB2 binding site region. The PIK3R1 binding site stretch occupies residues 72 to 75 (YINM).

The protein belongs to the DAP10 family. In terms of assembly, homodimer; Disulfide-linked. Heterohexamer composed of four subunits of HCST/DAP10 and two subunits of KLRK1. Interacts (via transmembrane domain) with KLRK1 (via transmembrane domain); the interaction is required for KLRK1 NK cell surface and induces NK cell-mediated cytotoxicity. Interacts with PIK3R1 and GRB2. Interacts with CLEC5A. Forms an CLEC5A/TYROBP/HCST trimolecular complex depending almost solely on TYROBP. Interacts with KLRK1. Interacts with CD300H. Post-translationally, phosphorylated; PIK3R1 and GRB2 associate specifically with tyrosine-phosphorylated HCST. In terms of processing, O-glycosylated. In terms of tissue distribution, expressed predominantly in lymphohematopoietic tissues.

It localises to the membrane. Functionally, transmembrane adapter protein which associates with KLRK1 to form an activation receptor KLRK1-HCST in lymphoid and myeloid cells; this receptor plays a major role in triggering cytotoxicity against target cells expressing cell surface ligands such as MHC class I chain-related MICA and MICB, and UL16-binding proteins (ULBPs); these ligands are up-regulated by stress conditions and pathological state such as viral infection and tumor transformation. Functions as a docking site for PI3-kinase PIK3R1 and GRB2. Interaction of ULBPs with KLRK1-HCST triggers calcium mobilization and activation of the PIK3R1, MAP2K/ERK, and JAK2/STAT5 signaling pathways. Both PIK3R1 and GRB2 are required for full KLRK1-HCST-mediated activation and ultimate killing of target cells. In NK cells, KLRK1-HCST signaling directly induces cytotoxicity and enhances cytokine production initiated via DAP12/TYROBP-associated receptors. In T-cells, it provides primarily costimulation for TCR-induced signals. KLRK1-HCST receptor plays a role in immune surveillance against tumors and is required for cytolysis of tumors cells; indeed, melanoma cells that do not express KLRK1 ligands escape from immune surveillance mediated by NK cells. This is Hematopoietic cell signal transducer (HCST) from Sus scrofa (Pig).